The primary structure comprises 285 residues: Nucleotide-binding protein PSPPH_4154 (285 aa).

8–15 is an ATP binding site; it reads GRSGSGKS. Residue 60 to 63 participates in GTP binding; sequence DARN.

This sequence belongs to the RapZ-like family.

Its function is as follows. Displays ATPase and GTPase activities. This chain is Nucleotide-binding protein PSPPH_4154, found in Pseudomonas savastanoi pv. phaseolicola (strain 1448A / Race 6) (Pseudomonas syringae pv. phaseolicola (strain 1448A / Race 6)).